Here is a 146-residue protein sequence, read N- to C-terminus: Probable actin-related protein 2/3 complex subunit 5 (146 aa).

Belongs to the ARPC5 family. In terms of assembly, component of the Arp2/3 complex composed of ARP2, ARP3, ARPC1B/p41-ARC, ARPC2/p34-ARC, ARPC3/p21-ARC, ARPC4/p20-ARC and ARPC5/p16-ARC.

The protein resides in the cytoplasm. It is found in the cytoskeleton. In terms of biological role, functions as a component of the Arp2/3 complex which is involved in regulation of actin polymerization and together with an activating nucleation-promoting factor (NPF) mediates the formation of branched actin networks. The chain is Probable actin-related protein 2/3 complex subunit 5 from Caenorhabditis elegans.